The chain runs to 272 residues: Phosphonates import ATP-binding protein PhnC (272 aa).

One can recognise an ABC transporter domain in the interval 2-244 (LVFDKVNRVY…IQKRLYEIEH (243 aa)). ATP is bound at residue 35-42 (GPSGAGKS).

This sequence belongs to the ABC transporter superfamily. Phosphonates importer (TC 3.A.1.9.1) family. The complex is composed of two ATP-binding proteins (PhnC), two transmembrane proteins (PhnE) and a solute-binding protein (PhnD).

The protein resides in the cell inner membrane. It catalyses the reaction phosphonate(out) + ATP + H2O = phosphonate(in) + ADP + phosphate + H(+). Its function is as follows. Part of the ABC transporter complex PhnCDE involved in phosphonates import. Responsible for energy coupling to the transport system. The protein is Phosphonates import ATP-binding protein PhnC of Hydrogenovibrio crunogenus (strain DSM 25203 / XCL-2) (Thiomicrospira crunogena).